The sequence spans 658 residues: Vertnin (658 aa).

This sequence belongs to the vertnin family.

Its subcellular location is the nucleus. Functionally, acts as a transcription factor that regulates development of thoracic vertebrae. The protein is Vertnin (VRTN) of Bos taurus (Bovine).